The chain runs to 234 residues: Sugar fermentation stimulation protein homolog (234 aa).

This sequence belongs to the SfsA family.

The polypeptide is Sugar fermentation stimulation protein homolog (Citrobacter koseri (strain ATCC BAA-895 / CDC 4225-83 / SGSC4696)).